The primary structure comprises 277 residues: Small ribosomal subunit protein uS2 (277 aa).

Residues 226 to 277 (GQQARADRGEDLGAAVEPVAEPALVEEAAAPVTEDEQVPAEAAAETERQSDA) form a disordered region. Residues 239 to 257 (AAVEPVAEPALVEEAAAPV) show a composition bias toward low complexity.

Belongs to the universal ribosomal protein uS2 family.

In Sphingopyxis alaskensis (strain DSM 13593 / LMG 18877 / RB2256) (Sphingomonas alaskensis), this protein is Small ribosomal subunit protein uS2.